The primary structure comprises 318 residues: tRNA uridine(34) hydroxylase (318 aa).

The region spanning 125–219 (QDPNTVVIDA…YGTSKDTEGK (95 aa)) is the Rhodanese domain. Cysteine 179 functions as the Cysteine persulfide intermediate in the catalytic mechanism.

This sequence belongs to the TrhO family.

The catalysed reaction is uridine(34) in tRNA + AH2 + O2 = 5-hydroxyuridine(34) in tRNA + A + H2O. Its function is as follows. Catalyzes oxygen-dependent 5-hydroxyuridine (ho5U) modification at position 34 in tRNAs. This chain is tRNA uridine(34) hydroxylase, found in Acholeplasma laidlawii (strain PG-8A).